Consider the following 810-residue polypeptide: Soluble starch synthase 2-3, chloroplastic/amyloplastic (810 aa).

A chloroplast-targeting transit peptide spans 1–16; that stretch reads MSSAVVASSTTFLVAL. Disordered regions lie at residues 43-265 and 281-313; these read GRAG…PIPA and EPDA…SGPL. Residues 63-83 are compositionally biased toward basic and acidic residues; that stretch reads RDAGVVRRADDGENEAAVERA. Residues 84 to 93 are compositionally biased toward acidic residues; sequence GEDDEEEEEF. Positions 102–116 are enriched in basic residues; the sequence is RSRRGGVGKVLKRRG. Positions 129–148 are enriched in low complexity; the sequence is DAARVRGAAAPAPAPTQDAA. Over residues 281–310 the composition is skewed to acidic residues; sequence EPDAAEDGDDDDDWADSDASDSEIDQDDDS. Lys333 contributes to the ADP-alpha-D-glucose binding site.

It belongs to the glycosyltransferase 1 family. Bacterial/plant glycogen synthase subfamily. As to expression, expressed most exclusively in endosperm.

The protein localises to the plastid. It localises to the amyloplast. Its subcellular location is the chloroplast. The catalysed reaction is [(1-&gt;4)-alpha-D-glucosyl](n) + ADP-alpha-D-glucose = [(1-&gt;4)-alpha-D-glucosyl](n+1) + ADP + H(+). It functions in the pathway glycan biosynthesis; starch biosynthesis. Functionally, plays an important role during endosperm starch synthesis. Determines the type of amylopectin structure of starch grain. Synthesizes long B1 amylopectin chains by elongating short A and B1 chains, independently of the other soluble starch synthases. Barely active in japonica subspecies. This is Soluble starch synthase 2-3, chloroplastic/amyloplastic (SSII-3) from Oryza sativa subsp. indica (Rice).